The following is a 1401-amino-acid chain: MTGSLLASKRIRKEFGSKSRVVDIPDLIGMQRTSFERFLQRNVPPEEREDIGIHLVFKSVLPIKDFTGTSSLEYVSYSFGETKHSMKECISRGMTYEIPVNITVRLVVYDVDKDAGVTSIRDIKEQEIYFGTIPLMTKRGTFIINGTERAVVSQLHRSSGVFFDHDKGKSHSSGKIIYTARIIPVRGSWIDMEIDPKDIVNIRIDRRRKFPVTILFKAFGYTNEDILSFFYKKEQIVKKDGILFKEFNPDNLKRNRASFDILDPETGEAVVKKGRLFTLRALKQLQVAGLKSIPISEEDIIGRGFATSVVHPETEEILAKAGSLIDPEVLEKIADAGITEFSILYVDTYSSDSMRKTLAVDKVTSRAEALIEIYRRLRPGNPATPEVAQDFIDHLFFKPAYYDLSNVGRLKMNHRLGMSTGIDVRTLRREDILLTAATLVELKDTQGAVDDIDHLGNRRVRAVGELLENQYRIGLVRMERAIKERMSMQEVDAMMPHDLVNPKPVSAVVREFFGTSQLSQFMDQTNPLSETTHKRRLSALGPGGLTRERAGFEVRDVHPSHYGRICPIETPEGPNIGLIVSLCTYARVNDFGFIETPYRIAKDGVVSKQITHLSAFEEKEHPIAQANAVLDDQGHLMNDLVTSRVGGEFEMVAKNDIEFMDVSPNQLVSVSASLIPFLENDDANRALMGSNMQRQAVPLIRSEAPLVGTGIEGVVARDSGVAIVAEHDGIVVDVDAKRIVVKNTENGKGSDDRTVTIYTASKFVRSNQNTCFNHRPIVKKGDAVRKGEVIADGPSTEMGELALGKNVTVAFMPWGGYNYEDSILVSERLVKEGVYTSVHVEEFEVVARDTKLGKEEITRDIPNAGEEALKDLDDSGIIRLGAEVKPGDILVGKITPKGETQLSPEEKLLRAIFGEKAGDVKDTSLRVPPGVEGVVTAAKVFSRRGLPKDDRTRLIEDLEIEKLEKDRDDEVRIITETIQERLEDILAGQALQAVVKKGKKVVVPAGTLVTRGLFEGISLTDLMGLTVEDSSLTEMAHVILEKAETQIKKARENFNNQASRYEKGDDLPPGVLKLIKINVAMKRVLSVGDKMAGRHGNKGVVSRILPVADLPYFEDGRTVDMVLNPLGVPSRMNVGQILEIHLGCAARGLGRQIDDLIYEKKTDELRARIKRIFTTPLIKTGERANKDKTHYDFSSHYTVEKSMAKRTNEEEIQFVDTIDHMDDTEFLEFASMYKNGVHMATPVFDGAAESEIKSLISYAGLDPSGQSTLYDGRTGEPFDKPITVGIMYMLKLHHLVDDKIHARSIGPYSLVTQQPLGGKAQFGGQRLGEMEVWAMEAYGAAHALQEFITVKSDDMTGRTRMYEKIVKGQNVLEPGMPESFRVLTKELQSLGLDINLLEGKK.

Belongs to the RNA polymerase beta chain family. In terms of assembly, the RNAP catalytic core consists of 2 alpha, 1 beta, 1 beta' and 1 omega subunit. When a sigma factor is associated with the core the holoenzyme is formed, which can initiate transcription.

It carries out the reaction RNA(n) + a ribonucleoside 5'-triphosphate = RNA(n+1) + diphosphate. Its function is as follows. DNA-dependent RNA polymerase catalyzes the transcription of DNA into RNA using the four ribonucleoside triphosphates as substrates. The chain is DNA-directed RNA polymerase subunit beta from Desulforapulum autotrophicum (strain ATCC 43914 / DSM 3382 / VKM B-1955 / HRM2) (Desulfobacterium autotrophicum).